Here is a 171-residue protein sequence, read N- to C-terminus: Nucleoside-triphosphatase THEP1 (171 aa).

ATP contacts are provided by residues Gly8–Ser15 and Val95–Gly102.

Belongs to the THEP1 NTPase family.

It catalyses the reaction a ribonucleoside 5'-triphosphate + H2O = a ribonucleoside 5'-diphosphate + phosphate + H(+). Has nucleotide phosphatase activity towards ATP, GTP, CTP, TTP and UTP. May hydrolyze nucleoside diphosphates with lower efficiency. The chain is Nucleoside-triphosphatase THEP1 from Ignicoccus hospitalis (strain KIN4/I / DSM 18386 / JCM 14125).